A 570-amino-acid polypeptide reads, in one-letter code: Dihydroxy-acid dehydratase (570 aa).

A [2Fe-2S] cluster-binding site is contributed by Cys61. Asp94 provides a ligand contact to Mg(2+). Position 135 (Cys135) interacts with [2Fe-2S] cluster. The Mg(2+) site is built by Asp136 and Lys137. N6-carboxylysine is present on Lys137. Position 207 (Cys207) interacts with [2Fe-2S] cluster. Glu459 is a binding site for Mg(2+). The Proton acceptor role is filled by Ser485.

Belongs to the IlvD/Edd family. In terms of assembly, homodimer. Requires [2Fe-2S] cluster as cofactor. The cofactor is Mg(2+).

It catalyses the reaction (2R)-2,3-dihydroxy-3-methylbutanoate = 3-methyl-2-oxobutanoate + H2O. It carries out the reaction (2R,3R)-2,3-dihydroxy-3-methylpentanoate = (S)-3-methyl-2-oxopentanoate + H2O. It functions in the pathway amino-acid biosynthesis; L-isoleucine biosynthesis; L-isoleucine from 2-oxobutanoate: step 3/4. The protein operates within amino-acid biosynthesis; L-valine biosynthesis; L-valine from pyruvate: step 3/4. In terms of biological role, functions in the biosynthesis of branched-chain amino acids. Catalyzes the dehydration of (2R,3R)-2,3-dihydroxy-3-methylpentanoate (2,3-dihydroxy-3-methylvalerate) into 2-oxo-3-methylpentanoate (2-oxo-3-methylvalerate) and of (2R)-2,3-dihydroxy-3-methylbutanoate (2,3-dihydroxyisovalerate) into 2-oxo-3-methylbutanoate (2-oxoisovalerate), the penultimate precursor to L-isoleucine and L-valine, respectively. This is Dihydroxy-acid dehydratase from Lactococcus lactis subsp. cremoris (strain MG1363).